Consider the following 184-residue polypeptide: MKNVTDSFLSLGPWPSAGSFGFNTDIFATNPINLSVVLGVLIFFGKGVLSDLLDNRKQRILNTIRNSEELRGGAIEQLEKARARLRKIETEAEQFRVNGYSEIEREKLNLIQSTYKTLEQLENYKNETIRFEQQRALNQVRQRVFQQALQRALGTLNSCLNNELHLRTISANIGMLGTMKEITD.

A helical membrane pass occupies residues Phe27–Leu49.

This sequence belongs to the ATPase B chain family. As to quaternary structure, F-type ATPases have 2 components, F(1) - the catalytic core - and F(0) - the membrane proton channel. F(1) has five subunits: alpha(3), beta(3), gamma(1), delta(1), epsilon(1). F(0) has four main subunits: a(1), b(1), b'(1) and c(10-14). The alpha and beta chains form an alternating ring which encloses part of the gamma chain. F(1) is attached to F(0) by a central stalk formed by the gamma and epsilon chains, while a peripheral stalk is formed by the delta, b and b' chains.

It is found in the plastid. The protein resides in the chloroplast thylakoid membrane. In terms of biological role, f(1)F(0) ATP synthase produces ATP from ADP in the presence of a proton or sodium gradient. F-type ATPases consist of two structural domains, F(1) containing the extramembraneous catalytic core and F(0) containing the membrane proton channel, linked together by a central stalk and a peripheral stalk. During catalysis, ATP synthesis in the catalytic domain of F(1) is coupled via a rotary mechanism of the central stalk subunits to proton translocation. Component of the F(0) channel, it forms part of the peripheral stalk, linking F(1) to F(0). The chain is ATP synthase subunit b, chloroplastic from Ipomoea purpurea (Common morning glory).